We begin with the raw amino-acid sequence, 468 residues long: Soluble pyridine nucleotide transhydrogenase (468 aa).

38–47 contributes to the FAD binding site; sequence ERHYNVGGGC.

It belongs to the class-I pyridine nucleotide-disulfide oxidoreductase family. It depends on FAD as a cofactor.

It localises to the cytoplasm. It carries out the reaction NAD(+) + NADPH = NADH + NADP(+). Conversion of NADPH, generated by peripheral catabolic pathways, to NADH, which can enter the respiratory chain for energy generation. This chain is Soluble pyridine nucleotide transhydrogenase, found in Pectobacterium atrosepticum (strain SCRI 1043 / ATCC BAA-672) (Erwinia carotovora subsp. atroseptica).